The sequence spans 448 residues: N-succinylarginine dihydrolase (448 aa).

Substrate is bound by residues 19–28 (GGLSYGNVAS), asparagine 110, and 137–138 (HR). Residue glutamate 174 is part of the active site. Residue arginine 214 coordinates substrate. Histidine 250 is a catalytic residue. Substrate is bound by residues aspartate 252 and asparagine 365. The active-site Nucleophile is cysteine 371.

This sequence belongs to the succinylarginine dihydrolase family. In terms of assembly, homodimer.

It carries out the reaction N(2)-succinyl-L-arginine + 2 H2O + 2 H(+) = N(2)-succinyl-L-ornithine + 2 NH4(+) + CO2. It participates in amino-acid degradation; L-arginine degradation via AST pathway; L-glutamate and succinate from L-arginine: step 2/5. Functionally, catalyzes the hydrolysis of N(2)-succinylarginine into N(2)-succinylornithine, ammonia and CO(2). This chain is N-succinylarginine dihydrolase, found in Pseudomonas aeruginosa (strain UCBPP-PA14).